Reading from the N-terminus, the 318-residue chain is Taste receptor type 2 member 7 (318 aa).

Residues 1-9 (MADKVQTTL) lie on the Extracellular side of the membrane. The helical transmembrane segment at 10-30 (LFLAVGEFSVGILGNAFIGLV) threads the bilayer. Residues 31–55 (NCMDWVKKRKIASIDLILTSLAISR) lie on the Cytoplasmic side of the membrane. A helical transmembrane segment spans residues 56 to 76 (ICLLCIILLDCFTLVLYPDVY). Topologically, residues 77 to 94 (ATGKEMRIIDFFWTLTNH) are extracellular. The chain crosses the membrane as a helical span at residues 95 to 115 (LSIWFATCLSIYYFFKIGNFF). Topologically, residues 116–128 (HPLFLWMKWRIDR) are cytoplasmic. A helical membrane pass occupies residues 129 to 149 (VISWILLGCVVLSVFISLPAT). The Extracellular portion of the chain corresponds to 150–187 (ENLNADFRFCVKAKRKTNLTWSCRVNKTQHASTKLFLN). N-linked (GlcNAc...) asparagine glycans are attached at residues Asn-167 and Asn-175. Residues 188 to 208 (LATLLPFCVCLMSFFLLILSL) form a helical membrane-spanning segment. Residues 209–235 (RRHIRRMQLSATGCRDPSTEAHVRALK) lie on the Cytoplasmic side of the membrane. A helical membrane pass occupies residues 236-256 (AVISFLLLFIAYYLSFLIATS). At 257-266 (SYFMPETELA) the chain is on the extracellular side. Residues 267–287 (VIFGESIALIYPSSHSFILIL) form a helical membrane-spanning segment. Topologically, residues 288 to 318 (GNNKLRYVSLKVIWKVMSILKGRKFQQHKQI) are cytoplasmic.

Belongs to the G-protein coupled receptor T2R family.

Its subcellular location is the membrane. Gustducin-coupled receptor implicated in the perception of bitter compounds in the oral cavity and the gastrointestinal tract. Signals through PLCB2 and the calcium-regulated cation channel TRPM5. In Gorilla gorilla gorilla (Western lowland gorilla), this protein is Taste receptor type 2 member 7 (TAS2R7).